Consider the following 413-residue polypeptide: Palmitoyltransferase ZDHHC6 (413 aa).

Residues 1 to 24 (MGTFCSVIKFENLQELKRLCHWGP) are Cytoplasmic-facing. A helical transmembrane segment spans residues 25-45 (IIALGVIAICSTMAMIDSVLW). Topologically, residues 46–57 (YWPLHTTGGSVN) are lumenal. Residues 58–78 (FIMLINWTVMILYNYFNAMFV) form a helical membrane-spanning segment. At 79–143 (GPGFVPLGWK…NCCGYQNHAS (65 aa)) the chain is on the cytoplasmic side. The 51-residue stretch at 99–149 (QYCKVCQAYKAPRSHHCRKCNRCVMKMDHHCPWINNCCGYQNHASFTLFLL) folds into the DHHC domain. Cysteine 129 (S-palmitoyl cysteine intermediate) is an active-site residue. A helical membrane pass occupies residues 144 to 164 (FTLFLLLAPLGCIHAAFIFVM). Residues 165 to 205 (TMYTQLYHRLSFGWNTVKIDMSAARRDPLPIVPFGLAAFAT) lie on the Lumenal side of the membrane. A helical membrane pass occupies residues 206–226 (TLFALGLALGTTIAVGMLFFI). Residues 227-413 (QMKIILRNKT…QAPEGEKKNR (187 aa)) lie on the Cytoplasmic side of the membrane. The SH3 domain occupies 313–398 (VRSVRYKVIE…PRKCVEKCPC (86 aa)). S-palmitoyl cysteine attachment occurs at residues cysteine 328, cysteine 329, and cysteine 343. The Di-lysine motif motif lies at 410–413 (KKNR).

Belongs to the DHHC palmitoyltransferase family. As to quaternary structure, homooligomerizes. Interacts with SELENOK. Post-translationally, palmitoylated at 3 different sites by ZDHHC16. The combination of the different palmitoylation events strongly affects the quaternary assembly of ZDHHC6, its localization, stability and function. Palmitoylation at Cys-328 accelerates the turnover of ZDHHC6. Depalmitoylated by LYPLA2.

It localises to the endoplasmic reticulum membrane. The enzyme catalyses L-cysteinyl-[protein] + hexadecanoyl-CoA = S-hexadecanoyl-L-cysteinyl-[protein] + CoA. It carries out the reaction L-cysteinyl-[protein] + octadecanoyl-CoA = S-octadecanoyl-L-cysteinyl-[protein] + CoA. Functionally, endoplasmic reticulum palmitoyl acyltransferase that mediates palmitoylation of proteins such as AMFR, CALX, ITPR1 and TFRC. Palmitoylates calnexin (CALX), which is required for its association with the ribosome-translocon complex and efficient folding of glycosylated proteins. Mediates palmitoylation of AMFR, promoting AMFR distribution to the peripheral endoplasmic reticulum. Together with SELENOK, palmitoylates ITPR1 in immune cells, leading to regulate ITPR1 stability and function. Stearoyltransferase that mediates stearoylation of TFRC to inhibit TFRC-mediated activation of the JNK pathway and mitochondrial fragmentation. The chain is Palmitoyltransferase ZDHHC6 from Homo sapiens (Human).